The following is a 372-amino-acid chain: Chaperone protein DnaJ (372 aa).

A J domain is found at 5-69 (EFYDRLGVSK…QKRAAYDQYG (65 aa)). Residues 129 to 211 (GTEKEVKYHR…CHGTGHEKQA (83 aa)) form a CR-type zinc finger. Zn(2+) is bound by residues C142, C145, C159, C162, C185, C188, C199, and C202. CXXCXGXG motif repeat units follow at residues 142-149 (CRTCNGSG), 159-166 (CGRCHGAG), 185-192 (CDVCHGRG), and 199-206 (CTTCHGTG).

This sequence belongs to the DnaJ family. In terms of assembly, homodimer. Requires Zn(2+) as cofactor.

It is found in the cytoplasm. In terms of biological role, participates actively in the response to hyperosmotic and heat shock by preventing the aggregation of stress-denatured proteins and by disaggregating proteins, also in an autonomous, DnaK-independent fashion. Unfolded proteins bind initially to DnaJ; upon interaction with the DnaJ-bound protein, DnaK hydrolyzes its bound ATP, resulting in the formation of a stable complex. GrpE releases ADP from DnaK; ATP binding to DnaK triggers the release of the substrate protein, thus completing the reaction cycle. Several rounds of ATP-dependent interactions between DnaJ, DnaK and GrpE are required for fully efficient folding. Also involved, together with DnaK and GrpE, in the DNA replication of plasmids through activation of initiation proteins. This Streptococcus pneumoniae (strain ATCC BAA-255 / R6) protein is Chaperone protein DnaJ.